Consider the following 933-residue polypeptide: DNA repair-scaffolding protein (933 aa).

3 disordered regions span residues M1 to G34, S67 to L174, and Y205 to E224. Basic and acidic residues-rich tracts occupy residues W16–Q29, G71–T87, and R119–D132. A compositionally biased stretch (acidic residues) spans P138 to Q148. A necessary for interaction with RAD51 region spans residues D175–K469. Residues D214–E224 are compositionally biased toward basic and acidic residues.

In terms of assembly, found in a complex, at least composed of BLM, RAD51 and SPIDR; the complex formation is mediated by SPIDR. Interacts (via C-terminal region) with BLM; the interaction is direct. Interacts with RAD51; the interaction is direct. Interacts (via the C-terminal region) with FIGNL1 (via N-terminal one-half region); the interaction is direct.

The protein resides in the nucleus. Its function is as follows. Plays a role in DNA double-strand break (DBS) repair via homologous recombination (HR). Serves as a scaffolding protein that helps to promote the recruitment of DNA-processing enzymes like the helicase BLM and recombinase RAD51 to site of DNA damage, and hence contributes to maintain genomic integrity. This Mus musculus (Mouse) protein is DNA repair-scaffolding protein (Spidr).